The chain runs to 369 residues: Putative agmatine deiminase (369 aa).

Residue cysteine 355 is the Amidino-cysteine intermediate of the active site.

The protein belongs to the agmatine deiminase family.

It catalyses the reaction agmatine + H2O = N-carbamoylputrescine + NH4(+). This is Putative agmatine deiminase from Marinomonas sp. (strain MWYL1).